Consider the following 460-residue polypeptide: Arginine decarboxylase (460 aa).

Position 226 is an N6-(pyridoxal phosphate)lysine (lysine 226).

Belongs to the Orn/Lys/Arg decarboxylase class-I family. It depends on pyridoxal 5'-phosphate as a cofactor.

It localises to the cytoplasm. The enzyme catalyses L-arginine + H(+) = agmatine + CO2. It participates in amine and polyamine biosynthesis; agmatine biosynthesis; agmatine from L-arginine: step 1/1. Catalyzes the formation of agmatine from arginine. The protein is Arginine decarboxylase (speA) of Bacillus cereus (strain ATCC 14579 / DSM 31 / CCUG 7414 / JCM 2152 / NBRC 15305 / NCIMB 9373 / NCTC 2599 / NRRL B-3711).